The following is a 283-amino-acid chain: Release factor glutamine methyltransferase (283 aa).

S-adenosyl-L-methionine is bound by residues 120–124, Asp143, Phe172, and Asn187; that span reads GTGSG. 187 to 190 lines the substrate pocket; the sequence is NPPY.

This sequence belongs to the protein N5-glutamine methyltransferase family. PrmC subfamily.

The catalysed reaction is L-glutaminyl-[peptide chain release factor] + S-adenosyl-L-methionine = N(5)-methyl-L-glutaminyl-[peptide chain release factor] + S-adenosyl-L-homocysteine + H(+). In terms of biological role, methylates the class 1 translation termination release factors RF1/PrfA and RF2/PrfB on the glutamine residue of the universally conserved GGQ motif. The sequence is that of Release factor glutamine methyltransferase from Moorella thermoacetica (strain ATCC 39073 / JCM 9320).